Consider the following 108-residue polypeptide: Insertion element IS6110 uncharacterized 12.0 kDa protein (108 aa).

It belongs to the transposase 8 family.

This is Insertion element IS6110 uncharacterized 12.0 kDa protein from Mycobacterium bovis (strain ATCC BAA-935 / AF2122/97).